We begin with the raw amino-acid sequence, 484 residues long: Probable glycine dehydrogenase (decarboxylating) subunit 2 (484 aa).

Lysine 264 bears the N6-(pyridoxal phosphate)lysine mark.

The protein belongs to the GcvP family. C-terminal subunit subfamily. As to quaternary structure, the glycine cleavage system is composed of four proteins: P, T, L and H. In this organism, the P 'protein' is a heterodimer of two subunits. Requires pyridoxal 5'-phosphate as cofactor.

It catalyses the reaction N(6)-[(R)-lipoyl]-L-lysyl-[glycine-cleavage complex H protein] + glycine + H(+) = N(6)-[(R)-S(8)-aminomethyldihydrolipoyl]-L-lysyl-[glycine-cleavage complex H protein] + CO2. Its function is as follows. The glycine cleavage system catalyzes the degradation of glycine. The P protein binds the alpha-amino group of glycine through its pyridoxal phosphate cofactor; CO(2) is released and the remaining methylamine moiety is then transferred to the lipoamide cofactor of the H protein. This is Probable glycine dehydrogenase (decarboxylating) subunit 2 from Legionella pneumophila (strain Corby).